The primary structure comprises 209 residues: COP9 signalosome complex subunit 8 (209 aa).

Positions 8–179 (DNAFSFRKLL…GALDVSLNRF (172 aa)) constitute a PCI domain. S175 bears the Phosphoserine mark.

The protein belongs to the CSN8 family. In terms of assembly, component of the CSN complex, composed of COPS1/GPS1, COPS2, COPS3, COPS4, COPS5, COPS6, COPS7 (COPS7A or COPS7B), COPS8 and COPS9. In the complex, it probably interacts directly with COPS3, COPS4 and COPS7 (COPS7A or COPS7B).

It localises to the cytoplasm. It is found in the nucleus. Functionally, component of the COP9 signalosome complex (CSN), a complex involved in various cellular and developmental processes. The CSN complex is an essential regulator of the ubiquitin (Ubl) conjugation pathway by mediating the deneddylation of the cullin subunits of SCF-type E3 ligase complexes, leading to decrease the Ubl ligase activity of SCF-type complexes such as SCF, CSA or DDB2. The complex is also involved in phosphorylation of p53/TP53, c-jun/JUN, IkappaBalpha/NFKBIA, ITPK1 and IRF8/ICSBP, possibly via its association with CK2 and PKD kinases. CSN-dependent phosphorylation of TP53 and JUN promotes and protects degradation by the Ubl system, respectively. The polypeptide is COP9 signalosome complex subunit 8 (Cops8) (Rattus norvegicus (Rat)).